Reading from the N-terminus, the 358-residue chain is Phosphate acyltransferase (358 aa).

Residues 336-358 (SAAGAAPASPETAPTPHPSTRAA) are disordered.

It belongs to the PlsX family. Homodimer. Probably interacts with PlsY.

Its subcellular location is the cytoplasm. It catalyses the reaction a fatty acyl-[ACP] + phosphate = an acyl phosphate + holo-[ACP]. It participates in lipid metabolism; phospholipid metabolism. Catalyzes the reversible formation of acyl-phosphate (acyl-PO(4)) from acyl-[acyl-carrier-protein] (acyl-ACP). This enzyme utilizes acyl-ACP as fatty acyl donor, but not acyl-CoA. The chain is Phosphate acyltransferase from Cupriavidus pinatubonensis (strain JMP 134 / LMG 1197) (Cupriavidus necator (strain JMP 134)).